We begin with the raw amino-acid sequence, 68 residues long: Large ribosomal subunit protein bL35 (68 aa).

This sequence belongs to the bacterial ribosomal protein bL35 family.

This chain is Large ribosomal subunit protein bL35, found in Persephonella marina (strain DSM 14350 / EX-H1).